The following is a 334-amino-acid chain: D-alanine--D-alanine ligase (334 aa).

An ATP-grasp domain is found at 121-327 (KLWYDALDIP…FSEFLVQCVT (207 aa)). ATP is bound at residue 151–206 (AFGHWGSIFVKAARQGSSVGCYKVTTEDQIAPAIEAAFGFSEQVLVEQAVKPRELE). Mg(2+) is bound by residues D281, E294, and N296.

The protein belongs to the D-alanine--D-alanine ligase family. The cofactor is Mg(2+). Mn(2+) is required as a cofactor.

The protein localises to the cytoplasm. It carries out the reaction 2 D-alanine + ATP = D-alanyl-D-alanine + ADP + phosphate + H(+). It functions in the pathway cell wall biogenesis; peptidoglycan biosynthesis. Cell wall formation. The sequence is that of D-alanine--D-alanine ligase from Vibrio cholerae serotype O1 (strain ATCC 39315 / El Tor Inaba N16961).